The primary structure comprises 323 residues: tRNA U34 carboxymethyltransferase (323 aa).

Carboxy-S-adenosyl-L-methionine-binding positions include K91, W105, K110, G130, 181 to 182 (IE), M196, Y200, and R315.

The protein belongs to the class I-like SAM-binding methyltransferase superfamily. CmoB family. Homotetramer.

It carries out the reaction carboxy-S-adenosyl-L-methionine + 5-hydroxyuridine(34) in tRNA = 5-carboxymethoxyuridine(34) in tRNA + S-adenosyl-L-homocysteine + H(+). In terms of biological role, catalyzes carboxymethyl transfer from carboxy-S-adenosyl-L-methionine (Cx-SAM) to 5-hydroxyuridine (ho5U) to form 5-carboxymethoxyuridine (cmo5U) at position 34 in tRNAs. This Enterobacter sp. (strain 638) protein is tRNA U34 carboxymethyltransferase.